The primary structure comprises 813 residues: Disintegrin and metalloproteinase domain-containing protein 33 (813 aa).

The first 29 residues, 1-29, serve as a signal peptide directing secretion; the sequence is MGWRPRRARGTPLLLLLLLLLLWPVPGAG. Residues 30 to 203 constitute a propeptide that is removed on maturation; sequence VLQGHIPGQP…PGGPQSRGRR (174 aa). At 30–701 the chain is on the extracellular side; sequence VLQGHIPGQP…GPVQAENHDT (672 aa). An N-linked (GlcNAc...) asparagine glycan is attached at Asn109. Positions 131 to 138 match the Cysteine switch motif; sequence CTCSGMSG. Cys133 contributes to the Zn(2+) binding site. Asn145 carries an N-linked (GlcNAc...) asparagine glycan. The tract at residues 184 to 205 is disordered; sequence PGNKAGMTSLPGGPQSRGRREA. The Peptidase M12B domain occupies 210–409; that stretch reads KYLELYIVAD…GGGACLSNAP (200 aa). N-linked (GlcNAc...) asparagine glycans are attached at residues Asn231 and Asn276. Cystine bridges form between Cys320/Cys404, Cys360/Cys388, and Cys361/Cys371. Residue His345 participates in Zn(2+) binding. Glu346 is a catalytic residue. His349 and His355 together coordinate Zn(2+). Positions 417–503 constitute a Disintegrin domain; it reads PALCGNGFVE…HCPPDVYLLD (87 aa). Asn448 carries N-linked (GlcNAc...) asparagine glycosylation. Intrachain disulfides connect Cys475–Cys495, Cys653–Cys663, Cys657–Cys669, and Cys671–Cys680. Residues 649-681 enclose the EGF-like domain; that stretch reads ELQRCLTACHSHGVCNSNHNCHCAPGWAPPFCD. The helical transmembrane segment at 702–722 threads the bilayer; sequence FLLAMLLSVLLPLLPGAGLAW. The Cytoplasmic portion of the chain corresponds to 723–813; the sequence is CCYRLPGAHL…QVQMPRSCLW (91 aa). The segment at 746-813 is disordered; the sequence is SGPKDGPHRD…QVQMPRSCLW (68 aa). Residues 780-791 are compositionally biased toward basic and acidic residues; it reads ENSHEPSSHPEK.

Zn(2+) serves as cofactor. The precursor is cleaved by a furin endopeptidase. Expressed in all tissues, except liver, with high expression in placenta, lung, spleen and veins.

The protein resides in the membrane. This is Disintegrin and metalloproteinase domain-containing protein 33 (ADAM33) from Homo sapiens (Human).